The chain runs to 627 residues: Chaperone protein HtpG (627 aa).

Positions 1 to 343 are a; substrate-binding; it reads MATQEFQAET…SEDLSLNISR (343 aa). A b region spans residues 344 to 553; it reads EMLQQDKQLK…EGEISIEMEK (210 aa). Residues 554–627 form a c region; it reads VLQSMPNNQN…YTNNVCKIMS (74 aa).

This sequence belongs to the heat shock protein 90 family. As to quaternary structure, homodimer.

It is found in the cytoplasm. Functionally, molecular chaperone. Has ATPase activity. This is Chaperone protein HtpG from Natranaerobius thermophilus (strain ATCC BAA-1301 / DSM 18059 / JW/NM-WN-LF).